The sequence spans 396 residues: Elongation factor Tu (396 aa).

The tr-type G domain maps to 10–206 (KPHCNIGTIG…NVDEYIPQPE (197 aa)). The interval 19-26 (GHVDHGKT) is G1. 19 to 26 (GHVDHGKT) is a binding site for GTP. T26 lines the Mg(2+) pocket. The segment at 60-64 (GITIS) is G2. The segment at 81-84 (DCPG) is G3. GTP is bound by residues 81 to 85 (DCPGH) and 136 to 139 (NKCD). Positions 136 to 139 (NKCD) are G4. Positions 174–176 (SAL) are G5.

The protein belongs to the TRAFAC class translation factor GTPase superfamily. Classic translation factor GTPase family. EF-Tu/EF-1A subfamily. As to quaternary structure, monomer.

Its subcellular location is the cytoplasm. The enzyme catalyses GTP + H2O = GDP + phosphate + H(+). Its function is as follows. GTP hydrolase that promotes the GTP-dependent binding of aminoacyl-tRNA to the A-site of ribosomes during protein biosynthesis. This is Elongation factor Tu from Afipia carboxidovorans (strain ATCC 49405 / DSM 1227 / KCTC 32145 / OM5) (Oligotropha carboxidovorans).